The chain runs to 208 residues: UPF0637 protein BCG9842_B1177 (208 aa).

This sequence belongs to the UPF0637 family.

The polypeptide is UPF0637 protein BCG9842_B1177 (Bacillus cereus (strain G9842)).